The following is a 481-amino-acid chain: MEKIIEESKQGGSLILENKPENTKKLFIESYGCAMNFSDSEIVASILSGNGYNTTNVLEEADLVLVNTCSIRDKAEQTIRKRLEKYNAVKRINPKMKVGVLGCMAERLKDKFLEEEKIVDLVVGPDAYKDLPNLLNEVEEGRDAINVILSKDETYGDISPVRLMSNGITALVAITRGCDNMCTFCVVPFTRGRERSREPQSIMAEIQDLWHKGFKEITLLGQNVDSYLWYGGGLKKDFTNASEIQKATAVDFDQLLEMVAVGFPKMRIRFSTSNPQDMHESILHVMAKHSNICKHIHLPVQSGSNRILKEMNRLHTREEYMILIDKIRAIIPNASISQDMIAGFPTETEEDHQDTISLMQYVKYNFGYMYSYSERPGTLAGRKMKDDVSDEIKARRLQEIVDLQQKHAWWRSEDFIGQTVEVLVEKVSKKSTEEFSGRNSQSITVVFPKEHYKIGDFVNVKIKSCTSGTLKGEAVGYSEMN.

Residues 24-140 (KKLFIESYGC…LPNLLNEVEE (117 aa)) enclose the MTTase N-terminal domain. 6 residues coordinate [4Fe-4S] cluster: Cys33, Cys69, Cys103, Cys178, Cys182, and Cys185. Positions 164-411 (MSNGITALVA…DLQQKHAWWR (248 aa)) constitute a Radical SAM core domain. The region spanning 413-476 (EDFIGQTVEV…SGTLKGEAVG (64 aa)) is the TRAM domain.

It belongs to the methylthiotransferase family. MiaB subfamily. In terms of assembly, monomer. Requires [4Fe-4S] cluster as cofactor.

It localises to the cytoplasm. The catalysed reaction is N(6)-dimethylallyladenosine(37) in tRNA + (sulfur carrier)-SH + AH2 + 2 S-adenosyl-L-methionine = 2-methylsulfanyl-N(6)-dimethylallyladenosine(37) in tRNA + (sulfur carrier)-H + 5'-deoxyadenosine + L-methionine + A + S-adenosyl-L-homocysteine + 2 H(+). Functionally, catalyzes the methylthiolation of N6-(dimethylallyl)adenosine (i(6)A), leading to the formation of 2-methylthio-N6-(dimethylallyl)adenosine (ms(2)i(6)A) at position 37 in tRNAs that read codons beginning with uridine. This is tRNA-2-methylthio-N(6)-dimethylallyladenosine synthase from Flavobacterium psychrophilum (strain ATCC 49511 / DSM 21280 / CIP 103535 / JIP02/86).